Consider the following 152-residue polypeptide: Large ribosomal subunit protein uL13 (152 aa).

Belongs to the universal ribosomal protein uL13 family. In terms of assembly, part of the 50S ribosomal subunit.

Its function is as follows. This protein is one of the early assembly proteins of the 50S ribosomal subunit, although it is not seen to bind rRNA by itself. It is important during the early stages of 50S assembly. The protein is Large ribosomal subunit protein uL13 of Wolbachia pipientis wMel.